The following is a 626-amino-acid chain: Elongation factor 4 (626 aa).

A tr-type G domain is found at 14–195 (SVIRNFCIIA…QIVMDVPAPH (182 aa)). GTP-binding positions include 26–31 (DHGKST) and 142–145 (NKID). Residues 603–626 (LSTGEDSNDRDTKDKIRAAQKTEG) form a disordered region. Basic and acidic residues predominate over residues 609–626 (SNDRDTKDKIRAAQKTEG).

Belongs to the TRAFAC class translation factor GTPase superfamily. Classic translation factor GTPase family. LepA subfamily.

It localises to the cell membrane. It carries out the reaction GTP + H2O = GDP + phosphate + H(+). Required for accurate and efficient protein synthesis under certain stress conditions. May act as a fidelity factor of the translation reaction, by catalyzing a one-codon backward translocation of tRNAs on improperly translocated ribosomes. Back-translocation proceeds from a post-translocation (POST) complex to a pre-translocation (PRE) complex, thus giving elongation factor G a second chance to translocate the tRNAs correctly. Binds to ribosomes in a GTP-dependent manner. In Bifidobacterium longum (strain DJO10A), this protein is Elongation factor 4.